The sequence spans 333 residues: Ornithine carbamoyltransferase (333 aa).

Residues 56 to 59 (STRT), Q83, R107, and 134 to 137 (HPTQ) each bind carbamoyl phosphate. L-ornithine contacts are provided by residues N167, D231, and 235 to 236 (SM). Carbamoyl phosphate-binding positions include 273 to 274 (CL) and R318.

It belongs to the aspartate/ornithine carbamoyltransferase superfamily. OTCase family.

Its subcellular location is the cytoplasm. It carries out the reaction carbamoyl phosphate + L-ornithine = L-citrulline + phosphate + H(+). The protein operates within amino-acid biosynthesis; L-arginine biosynthesis; L-arginine from L-ornithine and carbamoyl phosphate: step 1/3. Its function is as follows. Has vitronectin and fibronectin-binding activity. Functionally, reversibly catalyzes the transfer of the carbamoyl group from carbamoyl phosphate (CP) to the N(epsilon) atom of ornithine (ORN) to produce L-citrulline. This is Ornithine carbamoyltransferase (argF) from Staphylococcus epidermidis (strain ATCC 12228 / FDA PCI 1200).